The chain runs to 156 residues: MRHYEVVFLVHPDQSEQLSAMMDRYRQIIETDGGCIHRLEDWGRRQLAYPIQKLYKAHYVLMNIECTPRTIEELTSAFRFNDAVLRDMVIRREEAITETSPLAKGEESGGRGYDSARSGRDRDESGGRGYDGARPGRDEDESKENTDRDEQSEDSE.

Residues 95–156 (AITETSPLAK…DRDEQSEDSE (62 aa)) form a disordered region. Positions 117 to 126 (RSGRDRDESG) are enriched in basic and acidic residues.

Belongs to the bacterial ribosomal protein bS6 family.

In terms of biological role, binds together with bS18 to 16S ribosomal RNA. This Nitrosococcus oceani (strain ATCC 19707 / BCRC 17464 / JCM 30415 / NCIMB 11848 / C-107) protein is Small ribosomal subunit protein bS6.